The following is a 76-amino-acid chain: Conotoxin TsMLCL-03 (76 aa).

The N-terminal stretch at 1-19 (MLCLPVFIILLLLASPAAP) is a signal peptide. The propeptide occupies 20-44 (NPLERRIQSDLIRTALEDADMKTPK).

The protein belongs to the conotoxin T superfamily. In terms of processing, contains 2 disulfide bonds that can be either 'C1-C3, C2-C4' or 'C1-C4, C2-C3', since these disulfide connectivities have been observed for conotoxins with cysteine framework V (for examples, see AC P0DQQ7 and AC P81755). In terms of tissue distribution, expressed by the venom duct.

Its subcellular location is the secreted. This is Conotoxin TsMLCL-03 from Conus tessulatus (Tessellate cone).